A 98-amino-acid polypeptide reads, in one-letter code: Large ribosomal subunit protein uL23 (98 aa).

The protein belongs to the universal ribosomal protein uL23 family. Part of the 50S ribosomal subunit. Contacts protein L29, and trigger factor when it is bound to the ribosome.

Its function is as follows. One of the early assembly proteins it binds 23S rRNA. One of the proteins that surrounds the polypeptide exit tunnel on the outside of the ribosome. Forms the main docking site for trigger factor binding to the ribosome. This is Large ribosomal subunit protein uL23 from Ruegeria pomeroyi (strain ATCC 700808 / DSM 15171 / DSS-3) (Silicibacter pomeroyi).